The sequence spans 116 residues: Large ribosomal subunit protein bL20 (116 aa).

It belongs to the bacterial ribosomal protein bL20 family.

In terms of biological role, binds directly to 23S ribosomal RNA and is necessary for the in vitro assembly process of the 50S ribosomal subunit. It is not involved in the protein synthesizing functions of that subunit. The sequence is that of Large ribosomal subunit protein bL20 from Acaryochloris marina (strain MBIC 11017).